Here is a 271-residue protein sequence, read N- to C-terminus: N-acetylaspartate synthetase (271 aa).

Residues 1–38 are disordered; the sequence is MTYRGTRKSPCCSPPPRCGPPLPSGPAGSALGPPSSGA. A compositionally biased stretch (pro residues) spans 12 to 24; the sequence is CSPPPRCGPPLPS. A compositionally biased stretch (low complexity) spans 25-37; it reads GPAGSALGPPSSG. Residues 89 to 109 form a helical membrane-spanning segment; the sequence is VYAVIIIMCFVVTKSLLVTCC. Positions 115 to 258 constitute an N-acetyltransferase domain; that stretch reads LGMRYYYSRK…HSLLERLFFQ (144 aa).

The protein belongs to the NAT8 family.

The protein resides in the cytoplasm. The protein localises to the microsome membrane. Its subcellular location is the mitochondrion membrane. It localises to the endoplasmic reticulum membrane. It catalyses the reaction L-aspartate + acetyl-CoA = N-acetyl-L-aspartate + CoA + H(+). Catalyzes the synthesis of N-acetylaspartate acid (NAA) from L-aspartate and acetyl-CoA. The sequence is that of N-acetylaspartate synthetase (nat8l) from Xenopus tropicalis (Western clawed frog).